Reading from the N-terminus, the 446-residue chain is UDP-N-acetylmuramoylalanine--D-glutamate ligase (446 aa).

Residue 116-122 participates in ATP binding; it reads GSNGKTT.

It belongs to the MurCDEF family.

It localises to the cytoplasm. The catalysed reaction is UDP-N-acetyl-alpha-D-muramoyl-L-alanine + D-glutamate + ATP = UDP-N-acetyl-alpha-D-muramoyl-L-alanyl-D-glutamate + ADP + phosphate + H(+). It functions in the pathway cell wall biogenesis; peptidoglycan biosynthesis. Cell wall formation. Catalyzes the addition of glutamate to the nucleotide precursor UDP-N-acetylmuramoyl-L-alanine (UMA). This Marinobacter nauticus (strain ATCC 700491 / DSM 11845 / VT8) (Marinobacter aquaeolei) protein is UDP-N-acetylmuramoylalanine--D-glutamate ligase.